A 91-amino-acid chain; its full sequence is Elongation factor 1-beta (91 aa).

The protein belongs to the EF-1-beta/EF-1-delta family.

In terms of biological role, promotes the exchange of GDP for GTP in EF-1-alpha/GDP, thus allowing the regeneration of EF-1-alpha/GTP that could then be used to form the ternary complex EF-1-alpha/GTP/AAtRNA. The sequence is that of Elongation factor 1-beta from Pyrococcus furiosus (strain ATCC 43587 / DSM 3638 / JCM 8422 / Vc1).